The sequence spans 189 residues: Interferon alpha-1 (189 aa).

Residues 1–23 (MARLCAFLMVLAVLSYWPTCSLG) form the signal peptide. Cystine bridges form between Cys24-Cys122 and Cys52-Cys162. Asn101 is a glycosylation site (N-linked (GlcNAc...) asparagine).

Belongs to the alpha/beta interferon family. Interacts with CR2. In terms of processing, glycosylated.

Its subcellular location is the secreted. Its function is as follows. Produced by macrophages, IFN-alpha have antiviral activities. Interferon stimulates the production of two enzymes: a protein kinase and an oligoadenylate synthetase. This chain is Interferon alpha-1 (Ifna1), found in Mus musculus (Mouse).